Reading from the N-terminus, the 475-residue chain is MAFDDLRSFLQALDDHGQLLKISEEVNAEPDLAAAANATGRIGDGAPALWFDNIRGFTDARVAMNTIGSWQNHAISLGLPPNTPVKKQIDEFIRRWDNFPIAPERRANPAWAQNTVDGDEINLFDILPLFRLNDGDGGFYLDKACVVSRDPLDPDNFGKQNVGIYRMEVKGKRKLGLQPVPMHDIALHLHKAEERGEDLPIAITLGNDPIITLMGATPLKYDQSEYEMAGALRESPYPIATAPLTGFDVPWGSEVILEGVIESRKREIEGPFGEFTGHYSGGRNMTVVRIDKVSYRTRPIFESLYLGMPWTEIDYLMGPATCVPLYQQLKAEFPEVQAVNAMYTHGLLAIISTKKRYGGFARAVGLRAMTTPHGLGYVKMVIMVDEDVDPFNLPQVMWALSSKVNPAGDLVQLPNMSVLELDPGSSPAGITDKLIIDATTPVAPDNRGHYSQPVVDLPETKAWAEKLTAMLAARK.

Positions 161, 183, and 225 each coordinate Mn(2+). Residues 161-166 (NVGIYR) and 182-183 (MH) contribute to the prenylated FMN site. Glutamate 274 acts as the Proton donor in catalysis.

Belongs to the UbiD family. YclC subfamily. The cofactor is prenylated FMN. Requires Mn(2+) as cofactor.

The enzyme catalyses 4-hydroxybenzoate + H(+) = phenol + CO2. It catalyses the reaction vanillate + H(+) = guaiacol + CO2. In terms of biological role, involved in the non-oxidative decarboxylation and detoxification of phenolic derivatives under both aerobic and anaerobic conditions. Phenolic acid decarboxylase that catalyzes the reversible decarboxylation of 4-hydroxybenzoate and vanillate. In Escherichia coli O157:H7, this protein is Phenolic acid decarboxylase.